The following is a 521-amino-acid chain: Aspartic proteinase yapsin-1 (521 aa).

Residues 1–17 (MRIWILIFFSFIKLVSS) form the signal peptide. Residues 18 to 500 (LQYTGNGVLA…NAVANAGNSF (483 aa)) are Extracellular-facing. Positions 67-409 (YTTTLSIGRP…HQSQKMIAIG (343 aa)) constitute a Peptidase A1 domain. Residue Asp85 is part of the active site. Asn136, Asn157, Asn250, Asn289, Asn295, Asn354, Asn414, Asn418, Asn460, and Asn484 each carry an N-linked (GlcNAc...) asparagine glycan. The chain crosses the membrane as a helical span at residues 501-521 (SPLSAMVIMMMSAVFLGLGII).

It belongs to the peptidase A1 family.

The protein resides in the endoplasmic reticulum membrane. Its subcellular location is the secreted. It localises to the cell wall. Its function is as follows. Cleaves at paired basic residues. The protein is Aspartic proteinase yapsin-1 (yps1) of Schizosaccharomyces pombe (strain 972 / ATCC 24843) (Fission yeast).